A 538-amino-acid polypeptide reads, in one-letter code: uncharacterized protein (538 aa).

4 disordered regions span residues Arg20–Gln71, Leu151–Lys211, Met288–Lys331, and Glu458–Tyr482. Basic and acidic residues predominate over residues Glu154 to Asp171.

This is an uncharacterized protein from Homo sapiens (Human).